Consider the following 449-residue polypeptide: MSAMIEKVLIANRGEIALRILRACRELGIKTVAVHSEADRDLKHVLLADESVCIGPAPAMQSYLNVPAIISAAEVTDTVAIHPGYGFLSENADFAERVEKSGFIFIGPRPETIRLMGDKVSAIAAMKAAGVPCVPGSDGPIDDNKKRTLELAREIGYPIMIKSSGGGGGRGMRVVHSEATLLNAIALTRAEAAAAFNNDMVYMEKYLENPRHIEFQVLADQMGNAIHLGERDCSMQRRHQKVVEEAPAPGITEEQRREIGERCAAACRSIGYRGAGTFEFLYENGQFYFIEMNTRVQVEHPVTEMVTGVDIVKEQILIAAGEPLRYRQSDIQMRGHAIECRINAEHPETFMPSPGKITDFHAPGGPGVRIETHIYSGYTVPCHYDSMIGKLITHGEDRESAVARMCNALRETVIEGIHSNIKLQRSIMRDGAFLAGGANIHYLEKMLGL.

Residues 4–448 (MIEKVLIANR…NIHYLEKMLG (445 aa)) form the Biotin carboxylation domain. ATP is bound by residues Lys119, Lys162, 168 to 169 (GG), 204 to 207 (EKYL), His212, and His239. Residues 123–320 (IAAMKAAGVP…IVKEQILIAA (198 aa)) enclose the ATP-grasp domain. Residue Lys241 coordinates hydrogencarbonate. Residues Glu279 and Glu291 each coordinate ATP. Mg(2+) contacts are provided by Glu279, Glu291, and Asn293. Mn(2+) contacts are provided by Glu279, Glu291, and Asn293. 3 residues coordinate hydrogencarbonate: Arg295, Val298, and Arg341. Residue Arg295 is part of the active site. Arg341 contributes to the biotin binding site.

In terms of assembly, acetyl-CoA carboxylase is a heterohexamer of biotin carboxyl carrier protein, biotin carboxylase and the two subunits of carboxyl transferase in a 2:2 complex. The cofactor is Mg(2+). Requires Mn(2+) as cofactor.

It catalyses the reaction N(6)-biotinyl-L-lysyl-[protein] + hydrogencarbonate + ATP = N(6)-carboxybiotinyl-L-lysyl-[protein] + ADP + phosphate + H(+). It participates in lipid metabolism; malonyl-CoA biosynthesis; malonyl-CoA from acetyl-CoA: step 1/1. In terms of biological role, this protein is a component of the acetyl coenzyme A carboxylase complex; first, biotin carboxylase catalyzes the carboxylation of the carrier protein and then the transcarboxylase transfers the carboxyl group to form malonyl-CoA. This chain is Biotin carboxylase (accC), found in Allochromatium vinosum (strain ATCC 17899 / DSM 180 / NBRC 103801 / NCIMB 10441 / D) (Chromatium vinosum).